Here is a 496-residue protein sequence, read N- to C-terminus: 2-methylcitrate dehydratase-like protein oryR (496 aa).

It belongs to the PrpD family.

It functions in the pathway secondary metabolite biosynthesis. Functionally, 2-methylcitrate dehydratase-like protein; part of the gene cluster that mediates the biosynthesis of oryzines, natural products with an unusual maleidride backbone. The two subunits of the fungal fatty acid synthase oryfasA and oryfasB probably form octenoic acid. This fatty acid is most likely activated by the acyl-CoA ligase oryP to give octenyl-CoA before the citrate synthase-like protein oryE catalyzes condensation with oxaloacetate to form tricarboxylic acid. The next steps of the pathways are conjectural, but a favorite possible route has been proposed, beginning with decarboxylation and concomitant dehydration by the decarboxylase oryM, followed by tautomerization, which may lead to the production of a diene intermediate. Reduction of this diene intermediate could give the known metabolite piliformic acid. On the pathway to oryzine B and oryzine A, however, hydroxylation of the diene by the alpha-ketoglutarate-dependent dioxygenase oryG and lactonisation by the lactonohydrolases oryH or oryL could give oryzine B directly. Finally, enoyl reduction by the dehydrogenase oryD would then convert oryzine B into oryzine A. This is 2-methylcitrate dehydratase-like protein oryR from Aspergillus oryzae (strain ATCC 42149 / RIB 40) (Yellow koji mold).